Consider the following 937-residue polypeptide: MSQPIPSASPALAALIERAVARVRHALPADAPWPEGLEHPLARVALASDFVVDTLARQPALLAHLAQPDPPPLPVPRLDPAQPQEWAAQLRRYRAAASARLVWRDVLGLDDVDATLAGATMLAETCLQCALQALEQQFATRHGQVIAEDGSVQRLVVFGLGKLGGGELNFSSDVDLVYAYPQAGQSDGARPLAAEEYFARLGQQLAKLLDETTADGFSHRVDLRLRPFGSAGRVALSFNGMDQYFQREGRDWERYAWLKARPVAGDIAAGEAWLETLRPFVYRRYLDFTALDGLRDMKAAITAEVARHARLDDIKRGPGGIREIEFLVQSLQLIRGGREASLRERRLLPALQALVDLGQIDPPTGQALAEAYRFLRRVENRLQMLRDAQTHALPQGEPERERIALGLGYAHWQALLEALAPHRTRVAAEFAELLAPRVHATAPDTLADYWRALPEGDAAPLLGIGLHDPNNAHHMLADFAQSSGVRALSDGARTRLDRVMPALLHAAIRATQPDAALRRVLGLLQATLRRTSYLALLDEQPSALARLVDVLSRSALLAERLAAYPLLLDELLDTRISGPLPDRAALHTACVDTLQIDDTEAALRELNERRLALSFRIALATLDGRQQPVDSTQQLAWLAEAVVQTVLQLAQTQLQAAHGQVPGGAFAIIGYGSLGGMELGFGSDLDLVFLYDHPREVEASDGKRPLEAGRWFARLAQKVMTLLGAETGAGRLYDIDVRLRPDGGKGALVSSLASYRDYQRDRAWTWEHQALVRARAVAGDAALCEAFVQVRRETLTRVRDPALLHEDVRKMRARMRSELDRSDAGRLDLKQGAGGLVDLEFLLQAGVLGQAAQHPALLLACATPALIDALVQVQWLPAESAAPLHHAHATLVEAGLSCTLDRRPRLVVSTPPIRDACQIVAAIADAQQLRFQPGKGA.

Residues M1–P436 form an adenylyl removase region. Positions P443–A937 are adenylyl transferase.

Belongs to the GlnE family. The cofactor is Mg(2+).

It carries out the reaction [glutamine synthetase]-O(4)-(5'-adenylyl)-L-tyrosine + phosphate = [glutamine synthetase]-L-tyrosine + ADP. The catalysed reaction is [glutamine synthetase]-L-tyrosine + ATP = [glutamine synthetase]-O(4)-(5'-adenylyl)-L-tyrosine + diphosphate. Involved in the regulation of glutamine synthetase GlnA, a key enzyme in the process to assimilate ammonia. When cellular nitrogen levels are high, the C-terminal adenylyl transferase (AT) inactivates GlnA by covalent transfer of an adenylyl group from ATP to specific tyrosine residue of GlnA, thus reducing its activity. Conversely, when nitrogen levels are low, the N-terminal adenylyl removase (AR) activates GlnA by removing the adenylyl group by phosphorolysis, increasing its activity. The regulatory region of GlnE binds the signal transduction protein PII (GlnB) which indicates the nitrogen status of the cell. The polypeptide is Bifunctional glutamine synthetase adenylyltransferase/adenylyl-removing enzyme (Xanthomonas campestris pv. campestris (strain B100)).